The primary structure comprises 963 residues: Probable sucrose-phosphate synthase 2 (963 aa).

The interval 111-150 is disordered; sequence KLRTDTNADMSEDLFEGEKGEDAGDPSVAYGDSTTGSSPK.

This sequence belongs to the glycosyltransferase 1 family. As to quaternary structure, homodimer or homotetramer. Expressed in germinating seeds.

The enzyme catalyses beta-D-fructose 6-phosphate + UDP-alpha-D-glucose = sucrose 6(F)-phosphate + UDP + H(+). It functions in the pathway glycan biosynthesis; sucrose biosynthesis; sucrose from D-fructose 6-phosphate and UDP-alpha-D-glucose: step 1/2. Its activity is regulated as follows. Activity is regulated by phosphorylation and moderated by concentration of metabolites and light. Its function is as follows. Plays a role in photosynthetic sucrose synthesis by catalyzing the rate-limiting step of sucrose biosynthesis from UDP-glucose and fructose- 6-phosphate. Involved in the regulation of carbon partitioning in the leaves of plants. May regulate the synthesis of sucrose and therefore play a major role as a limiting factor in the export of photoassimilates out of the leaf. Plays a role for sucrose availability that is essential for plant growth and fiber elongation. This chain is Probable sucrose-phosphate synthase 2 (SPS2), found in Oryza sativa subsp. japonica (Rice).